The following is a 364-amino-acid chain: Dual-specificity RNA methyltransferase RlmN (364 aa).

The active-site Proton acceptor is the Glu-91. Residues 97-333 (EDDRGTLCVS…VTVRKTRGDD (237 aa)) form the Radical SAM core domain. The cysteines at positions 104 and 338 are disulfide-linked. [4Fe-4S] cluster contacts are provided by Cys-111, Cys-115, and Cys-118. S-adenosyl-L-methionine-binding positions include 164–165 (GE), Ser-196, 218–220 (SLH), and Asn-295. Residue Cys-338 is the S-methylcysteine intermediate of the active site.

The protein belongs to the radical SAM superfamily. RlmN family. It depends on [4Fe-4S] cluster as a cofactor.

Its subcellular location is the cytoplasm. It catalyses the reaction adenosine(2503) in 23S rRNA + 2 reduced [2Fe-2S]-[ferredoxin] + 2 S-adenosyl-L-methionine = 2-methyladenosine(2503) in 23S rRNA + 5'-deoxyadenosine + L-methionine + 2 oxidized [2Fe-2S]-[ferredoxin] + S-adenosyl-L-homocysteine. The catalysed reaction is adenosine(37) in tRNA + 2 reduced [2Fe-2S]-[ferredoxin] + 2 S-adenosyl-L-methionine = 2-methyladenosine(37) in tRNA + 5'-deoxyadenosine + L-methionine + 2 oxidized [2Fe-2S]-[ferredoxin] + S-adenosyl-L-homocysteine. Functionally, specifically methylates position 2 of adenine 2503 in 23S rRNA and position 2 of adenine 37 in tRNAs. m2A2503 modification seems to play a crucial role in the proofreading step occurring at the peptidyl transferase center and thus would serve to optimize ribosomal fidelity. This chain is Dual-specificity RNA methyltransferase RlmN, found in Chromobacterium violaceum (strain ATCC 12472 / DSM 30191 / JCM 1249 / CCUG 213 / NBRC 12614 / NCIMB 9131 / NCTC 9757 / MK).